The following is a 315-amino-acid chain: tRNA pseudouridine synthase B (315 aa).

D47 functions as the Nucleophile in the catalytic mechanism.

Belongs to the pseudouridine synthase TruB family. Type 1 subfamily.

It catalyses the reaction uridine(55) in tRNA = pseudouridine(55) in tRNA. Its function is as follows. Responsible for synthesis of pseudouridine from uracil-55 in the psi GC loop of transfer RNAs. The chain is tRNA pseudouridine synthase B from Shewanella amazonensis (strain ATCC BAA-1098 / SB2B).